The chain runs to 233 residues: Large ribosomal subunit protein uL1 (233 aa).

Belongs to the universal ribosomal protein uL1 family. In terms of assembly, part of the 50S ribosomal subunit.

Binds directly to 23S rRNA. The L1 stalk is quite mobile in the ribosome, and is involved in E site tRNA release. Functionally, protein L1 is also a translational repressor protein, it controls the translation of the L11 operon by binding to its mRNA. The protein is Large ribosomal subunit protein uL1 of Brucella melitensis biotype 1 (strain ATCC 23456 / CCUG 17765 / NCTC 10094 / 16M).